A 217-amino-acid polypeptide reads, in one-letter code: Large ribosomal subunit protein uL16 (217 aa).

The protein belongs to the universal ribosomal protein uL16 family. Component of the small ribosomal subunit. Mature ribosomes consist of a small (40S) and a large (60S) subunit. The 40S subunit contains about 33 different proteins and 1 molecule of RNA (18S). The 60S subunit contains about 49 different proteins and 3 molecules of RNA (25S, 5.8S and 5S).

This Dictyostelium discoideum (Social amoeba) protein is Large ribosomal subunit protein uL16 (rpl10).